We begin with the raw amino-acid sequence, 329 residues long: Ketol-acid reductoisomerase (NADP(+)) (329 aa).

The region spanning 2–182 (TQLFYDTDAD…GGTRAGILET (181 aa)) is the KARI N-terminal Rossmann domain. Residues 25-28 (YGSQ), Ser51, Ser53, and 83-86 (DEFQ) each bind NADP(+). His108 is a catalytic residue. Gly134 contacts NADP(+). In terms of domain architecture, KARI C-terminal knotted spans 183–328 (NFKEETETDL…KGLRAMFSWL (146 aa)). 4 residues coordinate Mg(2+): Asp191, Glu195, Glu227, and Glu231. Ser252 provides a ligand contact to substrate.

The protein belongs to the ketol-acid reductoisomerase family. Requires Mg(2+) as cofactor.

It catalyses the reaction (2R)-2,3-dihydroxy-3-methylbutanoate + NADP(+) = (2S)-2-acetolactate + NADPH + H(+). It carries out the reaction (2R,3R)-2,3-dihydroxy-3-methylpentanoate + NADP(+) = (S)-2-ethyl-2-hydroxy-3-oxobutanoate + NADPH + H(+). The protein operates within amino-acid biosynthesis; L-isoleucine biosynthesis; L-isoleucine from 2-oxobutanoate: step 2/4. It functions in the pathway amino-acid biosynthesis; L-valine biosynthesis; L-valine from pyruvate: step 2/4. In terms of biological role, involved in the biosynthesis of branched-chain amino acids (BCAA). Catalyzes an alkyl-migration followed by a ketol-acid reduction of (S)-2-acetolactate (S2AL) to yield (R)-2,3-dihydroxy-isovalerate. In the isomerase reaction, S2AL is rearranged via a Mg-dependent methyl migration to produce 3-hydroxy-3-methyl-2-ketobutyrate (HMKB). In the reductase reaction, this 2-ketoacid undergoes a metal-dependent reduction by NADPH to yield (R)-2,3-dihydroxy-isovalerate. The sequence is that of Ketol-acid reductoisomerase (NADP(+)) from Prochlorococcus marinus (strain MIT 9515).